Consider the following 398-residue polypeptide: UPF0261 protein RA0729 (398 aa).

The protein belongs to the UPF0261 family.

The chain is UPF0261 protein RA0729 from Rhizobium meliloti (strain 1021) (Ensifer meliloti).